The chain runs to 311 residues: Homeobox protein CDX-2 (311 aa).

A Phosphoserine modification is found at serine 60. The segment at 111-151 (EYHAHHHPHHHPHHPAASPSCASGLLQTLNLGPPGPAATAA) is disordered. The segment covering 114–124 (AHHHPHHHPHH) has biased composition (basic residues). The interaction with DNA stretch occupies residues 185-215 (KDKYRVVYTDHQRLELEKEFHFSRYITIRRK). The homeobox DNA-binding region spans 185 to 244 (KDKYRVVYTDHQRLELEKEFHFSRYITIRRKSELAATLGLSERQVKIWFQNRRAKERKIK). The segment at 227 to 241 (RQVKIWFQNRRAKER) is interaction with 5-mCpG DNA. The disordered stretch occupies residues 239–311 (KERKIKKKQQ…GGVLNSTVTQ (73 aa)). A compositionally biased stretch (low complexity) spans 248-257 (QQQQQQQQQQ). The span at 258–268 (PPQPPPQPSQP) shows a compositional bias: pro residues. The residue at position 281 (serine 281) is a Phosphoserine; by CDK2. The 4S motif; modulates transactivation activity and protein stability motif lies at 281–293 (SPVTSLQGSVPGS). A compositionally biased stretch (low complexity) spans 285 to 298 (SLQGSVPGSVPGVL).

This sequence belongs to the Caudal homeobox family. Can bind DNA as a monomer or homodimer. Ubiquitinated, leading to its degradation by the proteasome. Post-translationally, phosphorylation at Ser-60 reduces transactivation capacity. Phosphorylation at Ser-281 reduces transactivation capacity and increases ubiquitin-dependent proteasome degradation. In the intestine, detected in ileum and proximal and distal colon (at protein level). In adult small intestine, predominantly localized in crypt and lower villus cells of the epithelium (at protein level). Expressed in the intestine but not detected in other tissues including stomach, liver, kidney, spleen, brain, heart, lung, pancreas, skeletal muscle and testis. Expressed specifically in gut epithelium where it is not restricted to a particular cell lineage. Abundant expression is seen in the proximal colon with slightly lower levels in distal colon. Expression in the proximal colon is not restricted either to a particular cell lineage or stage of differentiation while in the distal colon it is more abundant in the differentiated cells towards the top of the crypt.

It is found in the nucleus. Its function is as follows. Transcription factor which regulates the transcription of multiple genes expressed in the intestinal epithelium. Binds to the promoter of the intestinal sucrase-isomaltase SI and activates SI transcription. Binds to the DNA sequence 5'-ATAAAAACTTAT-3' in the promoter region of VDR and activates VDR transcription. Binds to and activates transcription of LPH. Activates transcription of CLDN2 and intestinal mucin MUC2. Binds to the 5'-AATTTTTTACAACACCT-3' DNA sequence in the promoter region of CA1 and activates CA1 transcription. Important in broad range of functions from early differentiation to maintenance of the intestinal epithelial lining of both the small and large intestine. Binds preferentially to methylated DNA. The sequence is that of Homeobox protein CDX-2 (Cdx2) from Mus musculus (Mouse).